Reading from the N-terminus, the 321-residue chain is Gap junction delta-2 protein (321 aa).

Over 1 to 19 (MGEWTILERLLEAAVQQHS) the chain is Cytoplasmic. A helical transmembrane segment spans residues 20-42 (TMIGRILLTVVVIFRILIVAIVG). Over 43 to 75 (ETVYDDEQTMFVCNTLQPGCNQACYDRAFPISH) the chain is Extracellular. Residues 76–98 (IRYWVFQIIMVCTPSLCFITYSV) form a helical membrane-spanning segment. Residues 99–197 (HQSAKQRERR…KLRRQEGISR (99 aa)) are Cytoplasmic-facing. A disordered region spans residues 117 to 141 (DRDPPESMGGPGGTGGGGSGGGKRE). Residues 125–137 (GGPGGTGGGGSGG) are compositionally biased toward gly residues. A helical transmembrane segment spans residues 198–220 (FYIIQVVFRNALEIGFLVGQYFL). Residues 221 to 252 (YGFSVPGLYECDRYPCIKEVECYVSRPTEKTV) lie on the Extracellular side of the membrane. The chain crosses the membrane as a helical span at residues 253-275 (FLVFMFAVSGICVVLNLAELNHL). At 276–321 (GWRKIKLAVRGAQAKRKSVYEIRNKDLPRVSVPNFGRTQSSDSAYV) the chain is on the cytoplasmic side.

The protein belongs to the connexin family. Delta-type subfamily. In terms of assembly, a connexon is composed of a hexamer of connexins.

It is found in the cell membrane. Its subcellular location is the cell junction. The protein resides in the gap junction. Its function is as follows. One gap junction consists of a cluster of closely packed pairs of transmembrane channels, the connexons, through which materials of low MW diffuse from one cell to a neighboring cell. The chain is Gap junction delta-2 protein (GJD2) from Bos taurus (Bovine).